We begin with the raw amino-acid sequence, 210 residues long: Ribosomal RNA large subunit methyltransferase E (210 aa).

S-adenosyl-L-methionine-binding residues include Gly-64, Trp-66, Asp-84, Asn-100, and Asp-125. Residue Lys-165 is the Proton acceptor of the active site.

This sequence belongs to the class I-like SAM-binding methyltransferase superfamily. RNA methyltransferase RlmE family.

It localises to the cytoplasm. It catalyses the reaction uridine(2552) in 23S rRNA + S-adenosyl-L-methionine = 2'-O-methyluridine(2552) in 23S rRNA + S-adenosyl-L-homocysteine + H(+). In terms of biological role, specifically methylates the uridine in position 2552 of 23S rRNA at the 2'-O position of the ribose in the fully assembled 50S ribosomal subunit. The polypeptide is Ribosomal RNA large subunit methyltransferase E (Buchnera aphidicola subsp. Baizongia pistaciae (strain Bp)).